Consider the following 267-residue polypeptide: Aliphatic sulfonates import ATP-binding protein SsuB 1 (267 aa).

Positions 35–249 (VRVRGLRRVF…RRADPAFDRL (215 aa)) constitute an ABC transporter domain. An ATP-binding site is contributed by 67 to 74 (GRSGSGKS).

The protein belongs to the ABC transporter superfamily. Aliphatic sulfonates importer (TC 3.A.1.17.2) family. As to quaternary structure, the complex is composed of two ATP-binding proteins (SsuB), two transmembrane proteins (SsuC) and a solute-binding protein (SsuA).

The protein localises to the cell membrane. It catalyses the reaction ATP + H2O + aliphatic sulfonate-[sulfonate-binding protein]Side 1 = ADP + phosphate + aliphatic sulfonateSide 2 + [sulfonate-binding protein]Side 1.. Its function is as follows. Part of the ABC transporter complex SsuABC involved in aliphatic sulfonates import. Responsible for energy coupling to the transport system. This chain is Aliphatic sulfonates import ATP-binding protein SsuB 1, found in Frankia alni (strain DSM 45986 / CECT 9034 / ACN14a).